The following is a 391-amino-acid chain: 5-amino-6-(D-ribitylamino)uracil--L-tyrosine 4-hydroxyphenyl transferase (391 aa).

The Radical SAM core domain maps to 55-302 (VTYVINRNIN…GAVARIYLGN (248 aa)). Cys69, Cys73, and Cys76 together coordinate [4Fe-4S] cluster.

The protein belongs to the radical SAM superfamily. CofH family. Consists of two subunits, CofG and CofH. [4Fe-4S] cluster is required as a cofactor.

It catalyses the reaction 5-amino-6-(D-ribitylamino)uracil + L-tyrosine + S-adenosyl-L-methionine = 5-amino-5-(4-hydroxybenzyl)-6-(D-ribitylimino)-5,6-dihydrouracil + 2-iminoacetate + 5'-deoxyadenosine + L-methionine + H(+). It participates in cofactor biosynthesis; coenzyme F0 biosynthesis. Its function is as follows. Catalyzes the radical-mediated synthesis of 5-amino-5-(4-hydroxybenzyl)-6-(D-ribitylimino)-5,6-dihydrouracil from 5-amino-6-(D-ribitylamino)uracil and L-tyrosine. This Trichormus variabilis (strain ATCC 29413 / PCC 7937) (Anabaena variabilis) protein is 5-amino-6-(D-ribitylamino)uracil--L-tyrosine 4-hydroxyphenyl transferase.